Here is a 393-residue protein sequence, read N- to C-terminus: S-adenosylmethionine synthase (393 aa).

A Mg(2+)-binding site is contributed by glutamate 9. Residue histidine 15 participates in ATP binding. Residue glutamate 43 participates in K(+) binding. L-methionine-binding residues include glutamate 56 and glutamine 99. Residues 167 to 169 (HGK), 235 to 238 (SGRF), aspartate 246, 252 to 253 (RK), alanine 269, lysine 273, and lysine 277 contribute to the ATP site. Aspartate 246 provides a ligand contact to L-methionine. Lysine 277 provides a ligand contact to L-methionine.

It belongs to the AdoMet synthase family. Homotetramer. Requires Mn(2+) as cofactor. Mg(2+) serves as cofactor. Co(2+) is required as a cofactor. It depends on K(+) as a cofactor. Root.

The protein localises to the cytoplasm. It carries out the reaction L-methionine + ATP + H2O = S-adenosyl-L-methionine + phosphate + diphosphate. It functions in the pathway amino-acid biosynthesis; S-adenosyl-L-methionine biosynthesis; S-adenosyl-L-methionine from L-methionine: step 1/1. Catalyzes the formation of S-adenosylmethionine from methionine and ATP. The reaction comprises two steps that are both catalyzed by the same enzyme: formation of S-adenosylmethionine (AdoMet) and triphosphate, and subsequent hydrolysis of the triphosphate. This Pinus banksiana (Jack pine) protein is S-adenosylmethionine synthase (METK).